The primary structure comprises 270 residues: 4-hydroxy-tetrahydrodipicolinate reductase (270 aa).

Residues 8–13 (GALGRM), Asp-34, 102–104 (GTT), and 128–131 (SQNY) contribute to the NAD(+) site. The active-site Proton donor/acceptor is His-160. His-161 serves as a coordination point for (S)-2,3,4,5-tetrahydrodipicolinate. Catalysis depends on Lys-164, which acts as the Proton donor. 170–171 (GT) contributes to the (S)-2,3,4,5-tetrahydrodipicolinate binding site.

This sequence belongs to the DapB family.

The protein localises to the cytoplasm. The enzyme catalyses (S)-2,3,4,5-tetrahydrodipicolinate + NAD(+) + H2O = (2S,4S)-4-hydroxy-2,3,4,5-tetrahydrodipicolinate + NADH + H(+). It carries out the reaction (S)-2,3,4,5-tetrahydrodipicolinate + NADP(+) + H2O = (2S,4S)-4-hydroxy-2,3,4,5-tetrahydrodipicolinate + NADPH + H(+). The protein operates within amino-acid biosynthesis; L-lysine biosynthesis via DAP pathway; (S)-tetrahydrodipicolinate from L-aspartate: step 4/4. Functionally, catalyzes the conversion of 4-hydroxy-tetrahydrodipicolinate (HTPA) to tetrahydrodipicolinate. In Methanococcus maripaludis (strain DSM 14266 / JCM 13030 / NBRC 101832 / S2 / LL), this protein is 4-hydroxy-tetrahydrodipicolinate reductase.